We begin with the raw amino-acid sequence, 69 residues long: MDAVDSVVDPLREFAKDSVRLVKRCHKPDRKEFTKVAARTAIGFVVMGFVGFFVKLIFIPINNIIVGSG.

At 1-32 (MDAVDSVVDPLREFAKDSVRLVKRCHKPDRKE) the chain is on the cytoplasmic side. Residues 33-61 (FTKVAARTAIGFVVMGFVGFFVKLIFIPI) form a helical membrane-spanning segment. The Extracellular segment spans residues 62 to 69 (NNIIVGSG).

This sequence belongs to the SecE/SEC61-gamma family. As to quaternary structure, heterotrimeric complex composed of SEC61-alpha, SEC61-beta and SEC61-gamma.

The protein resides in the endoplasmic reticulum membrane. In terms of biological role, necessary for protein translocation in the endoplasmic reticulum. The chain is Protein transport protein Sec61 subunit gamma from Oryza sativa subsp. japonica (Rice).